Consider the following 981-residue polypeptide: Alpha-mannosidase (981 aa).

Zn(2+) is bound by residues histidine 23, aspartate 25, and aspartate 145. Residue aspartate 145 is the Nucleophile of the active site. Residue asparagine 312 is glycosylated (N-linked (GlcNAc...) asparagine). Histidine 386 contributes to the Zn(2+) binding site. Intrachain disulfides connect cysteine 422–cysteine 432, cysteine 442–cysteine 450, and cysteine 800–cysteine 807. The N-linked (GlcNAc...) asparagine glycan is linked to asparagine 446. The interval 938–957 (KKMKWSVEGDNEQEPQAVRG) is disordered.

It belongs to the glycosyl hydrolase 38 family. Dimer of dimers of heavy and light subunits. Zn(2+) serves as cofactor. Produced as a precursor which is then proteolytically cleaved into a 66kD heavy subunit and a 44kD light subunit. Cleavage probably occurs in protein bodies/protein storage vacuoles.

The protein resides in the protein storage vacuole. The enzyme catalyses Hydrolysis of terminal, non-reducing alpha-D-mannose residues in alpha-D-mannosides.. Its activity is regulated as follows. Inhibited by 2,3,4,6-tetra-O-acetyl-5-fluoro-beta-L-gulopyranosyl fluoride which acts as a slow substrate, doubling as a competitive inhibitor as it forms a high steady state concentration of glycosyl-enzyme intermediate that blocks the active site. Inhibited by 2,3,4,6-tetra-O-acetyl-5-fluoro-alpha-D-mannopyranosyl fluoride which also acts as a slow substrate but no intermediates accumulate. Inhibited by EDTA. Inhibited by metal ion Cu(2+). Inhibited by metal ions Fe(2+), Cd(2+) and Co(2+). Inhibited by metal ions Ag(+) and Hg(2+). Competitively inhibited by mannono-1-4-lactone and mannono-1-5-lactone. Inhibited by swainsonine but not by 1-desoxymannojirimycin. Inhibited by pyrrolidine-3,4-diol derivatives. Its function is as follows. Liberates mannose from p-nitrophenyl-alpha-D-mannoside. Liberates mannose from further alpha-D-mannosides including methyl-, benzyl-alpha-D-mannoside, 1-6-linked di-, tri- and tetrasaccharides of alpha-D-mannose and mannosyl-rhamnose. Liberates mannose from various glycoproteins like ovalbumin and ovomucoid. Does not hydrolyze beta-D-mannosides. Has glycosyltransferase activity, forming disaccharides from mannose and lyxose but not from glucose, galactose, ribose, xylose or arabinose. The protein is Alpha-mannosidase of Canavalia ensiformis (Jack bean).